Reading from the N-terminus, the 238-residue chain is Lytic polysaccharide monooxygenase NCU01050 (238 aa).

The first 15 residues, 1-15, serve as a signal peptide directing secretion; the sequence is MKVLAPLVLASAASA. H16 provides a ligand contact to Cu(2+). Residue E45 participates in O2 binding. Intrachain disulfides connect C54–C186 and C156–C238. N75 is a glycosylation site (N-linked (GlcNAc...) asparagine). H99 contacts Cu(2+). 2 residues coordinate O2: H172 and Q181. Residue H172 is the Proton donor of the active site. Y183 serves as a coordination point for Cu(2+).

This sequence belongs to the polysaccharide monooxygenase AA9 family. As to quaternary structure, monomer. It depends on Cu(2+) as a cofactor. Post-translationally, N-linked glycans containing mannose and N-acetylglucosamine.

The protein resides in the secreted. It catalyses the reaction [(1-&gt;4)-beta-D-glucosyl]n+m + reduced acceptor + O2 = 4-dehydro-beta-D-glucosyl-[(1-&gt;4)-beta-D-glucosyl]n-1 + [(1-&gt;4)-beta-D-glucosyl]m + acceptor + H2O.. Its pathway is glycan metabolism; cellulose degradation. Inhibited by increasing levels of ascorbic acid. Its function is as follows. Catalyzes the oxidative cleavage of glycosidic bonds in cellulosic substrates via a copper-dependent mechanism. In the presence of an exogenous reductant ascorbic acid, degrades phosphoric acid swollen cellulose (PASC) to cello-oligosaccharides and 4-ketoaldoses, the end products oxidized at the non-reducing end. Somewhat active toward tamarind xyloglucan and konjac glucomannan, with improved activity with glucomannan in the presence of PASC. H(2)O(2) is able to substitute for O(2) in reactions with PASC, xyloglucan and glucomannan. Very weak activity on cellopentaose. No activity with birchwood xylan or ivory nut mannan. Disrupts plant cell wall polysaccharide substrates, such as recalcitrant crystalline cellulose. In Neurospora crassa (strain ATCC 24698 / 74-OR23-1A / CBS 708.71 / DSM 1257 / FGSC 987), this protein is Lytic polysaccharide monooxygenase NCU01050.